The sequence spans 177 residues: Protein-export protein SecB (177 aa).

Residues 1-22 (MSDENNSGAAAPEAQNPGQNAA) form a disordered region. Residues 8-22 (GAAAPEAQNPGQNAA) show a composition bias toward low complexity.

Belongs to the SecB family. In terms of assembly, homotetramer, a dimer of dimers. One homotetramer interacts with 1 SecA dimer.

The protein resides in the cytoplasm. One of the proteins required for the normal export of preproteins out of the cell cytoplasm. It is a molecular chaperone that binds to a subset of precursor proteins, maintaining them in a translocation-competent state. It also specifically binds to its receptor SecA. In Paracoccus denitrificans (strain Pd 1222), this protein is Protein-export protein SecB.